The sequence spans 288 residues: Bis(5'-nucleosyl)-tetraphosphatase, symmetrical (288 aa).

This sequence belongs to the Ap4A hydrolase family.

It carries out the reaction P(1),P(4)-bis(5'-adenosyl) tetraphosphate + H2O = 2 ADP + 2 H(+). In terms of biological role, hydrolyzes diadenosine 5',5'''-P1,P4-tetraphosphate to yield ADP. This chain is Bis(5'-nucleosyl)-tetraphosphatase, symmetrical, found in Baumannia cicadellinicola subsp. Homalodisca coagulata.